The primary structure comprises 288 residues: Type II iodothyronine deiodinase (288 aa).

The Lumenal segment spans residues 1–5 (MPHVN). Residues 6–26 (LLVVLLILPGVFSNCLFLALY) form a helical; Signal-anchor for type III membrane protein membrane-spanning segment. Topologically, residues 27 to 288 (DAVSFLRRAL…SFLESVKASR (262 aa)) are cytoplasmic. Residues 99 to 130 (SCAASSSSSHETPTPRTTAEAAATVTTSTTTT) are disordered. The active site involves Sec-160. A non-standard amino acid (selenocysteine) is located at residue Sec-160.

The protein belongs to the iodothyronine deiodinase family. As to quaternary structure, predominantly monomer. Can form homodimers but homodimerization is not essential for enzyme activity. Expressed in intestine, liver, kidney and brain of immediately premetamorphic larvae, of larvae in all stages of metamorphosis and of parasitic feeding juveniles. In immediately premetamorphic larvae, levels are significantly higher in intestine and liver than in kidney and brain.

Its subcellular location is the endoplasmic reticulum membrane. It catalyses the reaction 3,3',5-triiodo-L-thyronine + iodide + A + H(+) = L-thyroxine + AH2. The catalysed reaction is 3,3'-diiodo-L-thyronine + iodide + A + H(+) = 3,3',5'-triiodo-L-thyronine + AH2. The enzyme catalyses 3'-iodo-L-thyronine + iodide + A + H(+) = 3',5'-diiodo-L-thyronine + AH2. It carries out the reaction 3,3'-diiodothyronamine + iodide + A + H(+) = 3,3',5'-triiodothyronamine + AH2. It catalyses the reaction 3'-iodothyronamine + iodide + A + H(+) = 3',5'-diiodothyronamine + AH2. In terms of biological role, plays a crucial role in the metabolism of thyroid hormones (TH) and has specific roles in TH activation and inactivation by deiodination. Catalyzes the deiodination of L-thyroxine (T4) to 3,5,3'-triiodothyronine (T3), 3,3',5'-triiodothyronine (rT3) to 3,3'-diiodothyronine (3,3'-T2) and 3',5'-diiodothyronine (3',5'-T2) to 3'-monoiodothyronine (3'-T1) via outer-ring deiodination (ORD). Catalyzes the phenolic ring deiodinations of 3,3',5'-triiodothyronamine and 3',5'- diiodothyronamine. This is Type II iodothyronine deiodinase from Petromyzon marinus (Sea lamprey).